Consider the following 201-residue polypeptide: Holliday junction resolvase RecU (201 aa).

The segment at 1-26 is disordered; sequence MAIGYPNGKKYAASQEELPQQKRKAP. 4 residues coordinate Mg(2+): Thr-87, Asp-89, Glu-102, and Gln-121.

Belongs to the RecU family. It depends on Mg(2+) as a cofactor.

The protein resides in the cytoplasm. The enzyme catalyses Endonucleolytic cleavage at a junction such as a reciprocal single-stranded crossover between two homologous DNA duplexes (Holliday junction).. In terms of biological role, endonuclease that resolves Holliday junction intermediates in genetic recombination. Cleaves mobile four-strand junctions by introducing symmetrical nicks in paired strands. Promotes annealing of linear ssDNA with homologous dsDNA. Required for DNA repair, homologous recombination and chromosome segregation. The protein is Holliday junction resolvase RecU of Listeria monocytogenes serotype 4a (strain HCC23).